Consider the following 1381-residue polypeptide: Hepatocyte growth factor receptor (1381 aa).

The first 24 residues, 1-24 (MKAPAVLVPGILVLLFTLVQRSNG), serve as a signal peptide directing secretion. Residues 25 to 932 (ECKEALAKSE…VIVQPDQNFT (908 aa)) are Extracellular-facing. The Sema domain maps to 27–515 (KEALAKSEMN…TGKKITKIPL (489 aa)). An N-linked (GlcNAc...) asparagine glycan is attached at Asn45. Disulfide bonds link Cys95-Cys101, Cys98-Cys160, Cys133-Cys141, and Cys172-Cys175. An N-linked (GlcNAc...) asparagine glycan is attached at Asn106. A glycan (N-linked (GlcNAc...) asparagine) is linked at Asn149. Asn202 carries N-linked (GlcNAc...) asparagine glycosylation. Intrachain disulfides connect Cys298–Cys363 and Cys385–Cys397. N-linked (GlcNAc...) asparagine glycosylation is found at Asn399 and Asn405. 4 cysteine pairs are disulfide-bonded: Cys520/Cys538, Cys526/Cys561, Cys529/Cys545, and Cys541/Cys551. 3 consecutive IPT/TIG domains span residues 563-655 (PAIY…FSYV), 657-739 (PIIT…FSYR), and 742-836 (PIVY…LIYV). O-linked (Man) threonine glycosylation is present at Thr582. 2 N-linked (GlcNAc...) asparagine glycosylation sites follow: Asn607 and Asn635. Thr676 and Thr761 each carry an O-linked (Man) threonine glycan. Residues Asn785, Asn879, and Asn930 are each glycosylated (N-linked (GlcNAc...) asparagine). Residues 933–955 (GLIAGVVSISIALLLLLGLFLWL) traverse the membrane as a helical segment. Residues 956 to 1381 (KKRKQIKDLG…EDNADDEVDT (426 aa)) lie on the Cytoplasmic side of the membrane. Ser966 is subject to Phosphoserine. The residue at position 977 (Thr977) is a Phosphothreonine. Ser990, Ser997, and Ser1000 each carry phosphoserine. A Phosphotyrosine modification is found at Tyr1003. The region spanning 1078–1345 (VHFNEVIGRG…RISAIFSTFI (268 aa)) is the Protein kinase domain. Residues 1084 to 1092 (IGRGHFGCV) and Lys1110 contribute to the ATP site. The active-site Proton acceptor is Asp1204. Residues 1212-1381 (LDEKFTVKVA…EDNADDEVDT (170 aa)) form an interaction with RANBP9 region. Tyr1230 carries the phosphotyrosine modification. Phosphotyrosine; by autocatalysis is present on residues Tyr1234 and Tyr1235. Thr1289 bears the Phosphothreonine mark. The interval 1320 to 1359 (WHPKAEMRPSFSELVSRISAIFSTFIGEHYVHVNATYVNV) is interaction with MUC20. 2 positions are modified to phosphotyrosine; by autocatalysis: Tyr1349 and Tyr1356. Residue Tyr1365 is modified to Phosphotyrosine.

The protein belongs to the protein kinase superfamily. Tyr protein kinase family. As to quaternary structure, heterodimer made of an alpha chain (50 kDa) and a beta chain (145 kDa) which are disulfide linked. Binds PLXNB1. Interacts when phosphorylated with downstream effectors including STAT3, PIK3R1, SRC, PCLG1, GRB2 and GAB1. Interacts with SPSB1, SPSB2 and SPSB4. Interacts with INPP5D/SHIP1. When phosphorylated at Tyr-1356, interacts with INPPL1/SHIP2. Interacts with RANBP9 and RANBP10, as well as SPSB1, SPSB2, SPSB3 and SPSB4. SPSB1 binding occurs in the presence and in the absence of HGF, however HGF treatment has a positive effect on this interaction. Interacts with MUC20; prevents interaction with GRB2 and suppresses hepatocyte growth factor-induced cell proliferation. Interacts with GRB10. Interacts with PTPN1 and PTPN2. Interacts with HSP90AA1 and HSP90AB1; the interaction suppresses MET kinase activity. Interacts with tensin TNS3. Interacts (when phosphorylated) with tensin TNS4 (via SH2 domain); the interaction increases MET protein stability by inhibiting MET endocytosis and subsequent lysosomal degradation. Post-translationally, autophosphorylated in response to ligand binding on Tyr-1234 and Tyr-1235 in the kinase domain leading to further phosphorylation of Tyr-1349 and Tyr-1356 in the C-terminal multifunctional docking site. Dephosphorylated by PTPRJ at Tyr-1349 and Tyr-1365. Dephosphorylated by PTPN1 and PTPN2. Ubiquitinated. Ubiquitination by CBL regulates the receptor stability and activity through proteasomal degradation. In terms of processing, O-mannosylation of IPT/TIG domains by TMEM260 is required for protein maturation. O-mannosylated residues are composed of single mannose glycans that are not elongated or modified.

The protein localises to the membrane. It catalyses the reaction L-tyrosyl-[protein] + ATP = O-phospho-L-tyrosyl-[protein] + ADP + H(+). In its inactive state, the C-terminal tail interacts with the catalytic domain and inhibits the kinase activity. Upon ligand binding, the C-terminal tail is displaced and becomes phosphorylated, thus increasing the kinase activity. In terms of biological role, receptor tyrosine kinase that transduces signals from the extracellular matrix into the cytoplasm by binding to hepatocyte growth factor/HGF ligand. Regulates many physiological processes including proliferation, scattering, morphogenesis and survival. Ligand binding at the cell surface induces autophosphorylation of MET on its intracellular domain that provides docking sites for downstream signaling molecules. Following activation by ligand, interacts with the PI3-kinase subunit PIK3R1, PLCG1, SRC, GRB2, STAT3 or the adapter GAB1. Recruitment of these downstream effectors by MET leads to the activation of several signaling cascades including the RAS-ERK, PI3 kinase-AKT, or PLCgamma-PKC. The RAS-ERK activation is associated with the morphogenetic effects while PI3K/AKT coordinates prosurvival effects. During embryonic development, MET signaling plays a role in gastrulation, development and migration of muscles and neuronal precursors, angiogenesis and kidney formation. In adults, participates in wound healing as well as organ regeneration and tissue remodeling. Also promotes differentiation and proliferation of hematopoietic cells. This Papio anubis (Olive baboon) protein is Hepatocyte growth factor receptor (MET).